The sequence spans 224 residues: Ribosomal RNA large subunit methyltransferase E (224 aa).

Positions 64, 66, 97, 113, and 138 each coordinate S-adenosyl-L-methionine. Lys178 acts as the Proton acceptor in catalysis.

This sequence belongs to the class I-like SAM-binding methyltransferase superfamily. RNA methyltransferase RlmE family.

The protein localises to the cytoplasm. The catalysed reaction is uridine(2552) in 23S rRNA + S-adenosyl-L-methionine = 2'-O-methyluridine(2552) in 23S rRNA + S-adenosyl-L-homocysteine + H(+). Specifically methylates the uridine in position 2552 of 23S rRNA at the 2'-O position of the ribose in the fully assembled 50S ribosomal subunit. This Methylibium petroleiphilum (strain ATCC BAA-1232 / LMG 22953 / PM1) protein is Ribosomal RNA large subunit methyltransferase E.